The following is a 1252-amino-acid chain: DNA-directed RNA polymerase subunit beta (1252 aa).

Belongs to the RNA polymerase beta chain family. As to quaternary structure, the RNAP catalytic core consists of 2 alpha, 1 beta, 1 beta' and 1 omega subunit. When a sigma factor is associated with the core the holoenzyme is formed, which can initiate transcription.

The enzyme catalyses RNA(n) + a ribonucleoside 5'-triphosphate = RNA(n+1) + diphosphate. In terms of biological role, DNA-dependent RNA polymerase catalyzes the transcription of DNA into RNA using the four ribonucleoside triphosphates as substrates. The sequence is that of DNA-directed RNA polymerase subunit beta from Chlamydia trachomatis serovar L2 (strain ATCC VR-902B / DSM 19102 / 434/Bu).